A 145-amino-acid polypeptide reads, in one-letter code: MSNIIIVINGPNLNMLGKREPGIYGGKTLKDIENDCVNAGADLGFSVEFRQSNHEGVLVDWLHEAGERAAGVVINPGAYSHTSIALHDAIRAISTPVVEVHISNIHAREEFRHKSMVSPAAKGMICGFGPYGYVMALHALKNITA.

The active-site Proton acceptor is Tyr-24. Positions 75, 81, and 88 each coordinate substrate. The active-site Proton donor is His-101. Substrate contacts are provided by residues 102-103 (IS) and Arg-112.

The protein belongs to the type-II 3-dehydroquinase family. Homododecamer.

The enzyme catalyses 3-dehydroquinate = 3-dehydroshikimate + H2O. It participates in metabolic intermediate biosynthesis; chorismate biosynthesis; chorismate from D-erythrose 4-phosphate and phosphoenolpyruvate: step 3/7. In terms of biological role, catalyzes a trans-dehydration via an enolate intermediate. The protein is 3-dehydroquinate dehydratase 1 (aroQ1) of Agrobacterium fabrum (strain C58 / ATCC 33970) (Agrobacterium tumefaciens (strain C58)).